Consider the following 471-residue polypeptide: Eukaryotic translation initiation factor 3 subunit L (471 aa).

The 195-residue stretch at 252-446 (DAIRMFSHIL…DLDYAMQGDL (195 aa)) folds into the PCI domain.

This sequence belongs to the eIF-3 subunit L family.

The protein resides in the cytoplasm. Its function is as follows. Component of the eukaryotic translation initiation factor 3 (eIF-3) complex, which is involved in protein synthesis of a specialized repertoire of mRNAs and, together with other initiation factors, stimulates binding of mRNA and methionyl-tRNAi to the 40S ribosome. The eIF-3 complex specifically targets and initiates translation of a subset of mRNAs involved in cell proliferation. The polypeptide is Eukaryotic translation initiation factor 3 subunit L (Pyricularia oryzae (strain Y34) (Rice blast fungus)).